The primary structure comprises 505 residues: Glutamate--tRNA ligase (505 aa).

The 'HIGH' region motif lies at 12-22 (PSPTGDPHVGT). Residues 253 to 257 (KLSKR) carry the 'KMSKS' region motif. Lys-256 serves as a coordination point for ATP.

This sequence belongs to the class-I aminoacyl-tRNA synthetase family. Glutamate--tRNA ligase type 1 subfamily. Monomer.

The protein localises to the cytoplasm. The enzyme catalyses tRNA(Glu) + L-glutamate + ATP = L-glutamyl-tRNA(Glu) + AMP + diphosphate. In terms of biological role, catalyzes the attachment of glutamate to tRNA(Glu) in a two-step reaction: glutamate is first activated by ATP to form Glu-AMP and then transferred to the acceptor end of tRNA(Glu). The chain is Glutamate--tRNA ligase from Chlamydia caviae (strain ATCC VR-813 / DSM 19441 / 03DC25 / GPIC) (Chlamydophila caviae).